The chain runs to 738 residues: Conserved oligomeric Golgi complex subunit 4 (738 aa).

Belongs to the COG4 family. Component of the conserved oligomeric Golgi complex which is composed of eight different subunits and is required for normal Golgi morphology and localization. Interacts with COG2 and COG3.

It localises to the golgi apparatus membrane. In terms of biological role, required for normal Golgi function. The polypeptide is Conserved oligomeric Golgi complex subunit 4 (Arabidopsis thaliana (Mouse-ear cress)).